The chain runs to 259 residues: Aliphatic sulfonates import ATP-binding protein SsuB 2 (259 aa).

Residues 17 to 238 (LDILGLWKGF…VRSSQAFTSI (222 aa)) enclose the ABC transporter domain. ATP is bound at residue 49–56 (GRSGCGKS).

It belongs to the ABC transporter superfamily. Aliphatic sulfonates importer (TC 3.A.1.17.2) family. The complex is composed of two ATP-binding proteins (SsuB), two transmembrane proteins (SsuC) and a solute-binding protein (SsuA).

It localises to the cell inner membrane. It carries out the reaction ATP + H2O + aliphatic sulfonate-[sulfonate-binding protein]Side 1 = ADP + phosphate + aliphatic sulfonateSide 2 + [sulfonate-binding protein]Side 1.. Its function is as follows. Part of the ABC transporter complex SsuABC involved in aliphatic sulfonates import. Responsible for energy coupling to the transport system. This chain is Aliphatic sulfonates import ATP-binding protein SsuB 2, found in Agrobacterium fabrum (strain C58 / ATCC 33970) (Agrobacterium tumefaciens (strain C58)).